The chain runs to 428 residues: tRNA modification GTPase MnmE (428 aa).

Arg20, Glu77, and Lys117 together coordinate (6S)-5-formyl-5,6,7,8-tetrahydrofolate. Residues 213–351 (GFEIALVGAP…LLEKIRSVFS (139 aa)) form the TrmE-type G domain. Position 223 (Asn223) interacts with K(+). Residues 223–228 (NAGKST), 242–248 (SEIAGTT), and 267–270 (DTAG) contribute to the GTP site. Ser227 is a Mg(2+) binding site. K(+) contacts are provided by Ser242, Ile244, and Thr247. Thr248 provides a ligand contact to Mg(2+). Lys428 contacts (6S)-5-formyl-5,6,7,8-tetrahydrofolate.

Belongs to the TRAFAC class TrmE-Era-EngA-EngB-Septin-like GTPase superfamily. TrmE GTPase family. In terms of assembly, homodimer. Heterotetramer of two MnmE and two MnmG subunits. The cofactor is K(+).

The protein localises to the cytoplasm. In terms of biological role, exhibits a very high intrinsic GTPase hydrolysis rate. Involved in the addition of a carboxymethylaminomethyl (cmnm) group at the wobble position (U34) of certain tRNAs, forming tRNA-cmnm(5)s(2)U34. The chain is tRNA modification GTPase MnmE from Roseobacter denitrificans (strain ATCC 33942 / OCh 114) (Erythrobacter sp. (strain OCh 114)).